Consider the following 732-residue polypeptide: MEGGDQSEEEPRERSQAGGMGTLWSQESTPEERLPVEGSRPWAVARRVLTAILILGLLLCFSVLLFYNFQNCGPRPCETSVCLDLRDHYLASGNTSVAPCTDFFSFACGRAKETNNSFQELATKNKNRLRRILEVQNSWHPGSGEEKAFQFYNSCMDTLAIEAAGTGPLRQVIEELGGWRISGKWTSLNFNRTLRLLMSQYGHFPFFRAYLGPHPASPHTPVIQIDQPEFDVPLKQDQEQKIYAQIFREYLTYLNQLGTLLGGDPSKVQEHSSLSISITSRLFQFLRPLEQRRAQGKLFQMVTIDQLKEMAPAIDWLSCLQATFTPMSLSPSQSLVVHDVEYLKNMSQLVEEMLLKQRDFLQSHMILGLVVTLSPALDSQFQEARRKLSQKLRELTEQPPMPARPRWMKCVEETGTFFEPTLAALFVREAFGPSTRSAAMKLFTAIRDALITRLRNLPWMNEETQNMAQDKVAQLQVEMGASEWALKPELARQEYNDIQLGSSFLQSVLSCVRSLRARIVQSFLQPHPQHRWKVSPWDVNAYYSVSDHVVVFPAGLLQPPFFHPGYPRAVNFGAAGSIMAHELLHIFYQLLLPGGCLACDNHALQEAHLCLKRHYAAFPLPSRTSFNDSLTFLENAADVGGLAIALQAYSKRLLRHHGETVLPSLDLSPQQIFFRSYAQVMCRKPSPQDSHDTHSPPHLRVHGPLSSTPAFARYFRCARGALLNPSSRCQLW.

The tract at residues Met1–Glu37 is disordered. Topologically, residues Met1–Arg47 are cytoplasmic. The residue at position 7 (Ser7) is a Phosphoserine. Residues Val48–Tyr67 form a helical; Signal-anchor for type II membrane protein membrane-spanning segment. Residues Asn68–Trp732 are Extracellular-facing. Residues Pro76–Trp732 form the Peptidase M13 domain. Cys77 and Cys82 are oxidised to a cystine. N-linked (GlcNAc...) asparagine glycosylation is found at Asn94 and Asn115. Cystine bridges form between Cys100–Cys717, Cys108–Cys682, Cys155–Cys410, and Cys610–Cys729. Asn191 carries N-linked (GlcNAc...) asparagine; in KEL2 antigen glycosylation. The N-linked (GlcNAc...) asparagine glycan is linked to Asn345. Residue His581 coordinates Zn(2+). Glu582 is a catalytic residue. His585 is a binding site for Zn(2+). Asn627 is a glycosylation site (N-linked (GlcNAc...) asparagine). Position 634 (Glu634) interacts with Zn(2+). Residue Asp638 is the Proton donor of the active site. The tract at residues Lys684–Gly703 is disordered.

This sequence belongs to the peptidase M13 family. Heterodimer with XK; disulfide-linked. It depends on Zn(2+) as a cofactor. N-glycosylated. As to expression, expressed at high levels in erythrocytes and testis (in Sertoli cells), and, at lower levels, in skeletal muscle, tonsils (in follicular dendritic cells), lymph node, spleen and appendix (at protein level). Also expressed in many adult and fetal nonerythroid tissues, including brain, spleen, lymph nodes and bone marrow.

It localises to the cell membrane. In terms of biological role, zinc endopeptidase with endothelin-3-converting enzyme activity. Cleaves EDN1, EDN2 and EDN3, with a marked preference for EDN3. This chain is Kell blood group glycoprotein (KEL), found in Homo sapiens (Human).